We begin with the raw amino-acid sequence, 193 residues long: Ubiquitin-conjugating enzyme E2 E1 (193 aa).

The interval 1–45 (MSDDDSRASTSSSSSSSSNQQTEKETNTPKKKESKVSMSKNSKLL) is disordered. Ser2 bears the N-acetylserine mark. Residues 8–18 (ASTSSSSSSSS) are compositionally biased toward low complexity. Basic and acidic residues predominate over residues 22–35 (TEKETNTPKKKESK). Residues 36–45 (VSMSKNSKLL) are compositionally biased toward polar residues. The UBC core domain maps to 47 to 193 (TSAKRIQKEL…ARQWTKRYAT (147 aa)). Cys131 functions as the Glycyl thioester intermediate in the catalytic mechanism. A Glycyl lysine isopeptide (Lys-Gly) (interchain with G-Cter in ISG15) cross-link involves residue Lys136.

The protein belongs to the ubiquitin-conjugating enzyme family. As to quaternary structure, interacts with RNF14. ISGylation suppresses ubiquitin E2 enzyme activity. In terms of processing, autoubiquitinated in vitro.

Its subcellular location is the nucleus. It carries out the reaction S-ubiquitinyl-[E1 ubiquitin-activating enzyme]-L-cysteine + [E2 ubiquitin-conjugating enzyme]-L-cysteine = [E1 ubiquitin-activating enzyme]-L-cysteine + S-ubiquitinyl-[E2 ubiquitin-conjugating enzyme]-L-cysteine.. The catalysed reaction is S-ubiquitinyl-[E1 ubiquitin-activating enzyme]-L-cysteine + [acceptor protein]-L-lysine = [E1 ubiquitin-activating enzyme]-L-cysteine + N(6)-monoubiquitinyl-[acceptor protein]-L-lysine.. Its pathway is protein modification; protein ubiquitination. Accepts ubiquitin from the E1 complex and catalyzes its covalent attachment to other proteins. Catalyzes the covalent attachment of ISG15 to other proteins. Mediates the selective degradation of short-lived and abnormal proteins. In vitro also catalyzes 'Lys-48'-linked polyubiquitination. Catalyzes monoubiquitination of other proteins in both an E3-dependent and E3-independent manner. The chain is Ubiquitin-conjugating enzyme E2 E1 from Homo sapiens (Human).